We begin with the raw amino-acid sequence, 520 residues long: Cyclic GMP-AMP synthase-like receptor (520 aa).

Residues serine 68 and glutamate 80 to aspartate 82 contribute to the ATP site. The Mg(2+) site is built by glutamate 80, aspartate 82, and aspartate 198. Position 198 (aspartate 198) interacts with GTP. Lysine 264 is a binding site for ATP. Leucine 288 and aspartate 294 together coordinate Mn(2+).

It belongs to the mab-21 family. Mg(2+) is required as a cofactor. Mn(2+) serves as cofactor.

It carries out the reaction GTP + ATP = 2',3'-cGAMP + 2 diphosphate. The catalysed reaction is GTP + ATP = pppGp(2'-5')A + diphosphate. The enzyme catalyses pppGp(2'-5')A = 2',3'-cGAMP + diphosphate. Functionally, nucleotidyltransferase that catalyzes the formation of cyclic GMP-AMP (2',3'-cGAMP) from ATP and GTP and plays a key role in innate immunity. Acts as a key sensor of double-stranded RNA (dsRNA), the presence of dsRNA in the cytoplasm being a danger signal that triggers the immune responses. Directly binds dsRNA, activating the nucleotidyltransferase activity, leading to synthesis of 2',3'-cGAMP, a second messenger that binds to and activates Sting, thereby triggering the immune response via activation of the NF-kappa-B transcription factor. This Microplitis demolitor (Parasitoid wasp) protein is Cyclic GMP-AMP synthase-like receptor.